Consider the following 102-residue polypeptide: NADH-quinone oxidoreductase subunit K (102 aa).

3 helical membrane-spanning segments follow: residues 6 to 26 (FEHA…ALLI), 30 to 50 (LIVM…AFIA), and 62 to 82 (VMFL…LGLG).

Belongs to the complex I subunit 4L family. NDH-1 is composed of 14 different subunits. Subunits NuoA, H, J, K, L, M, N constitute the membrane sector of the complex.

It is found in the cell inner membrane. The catalysed reaction is a quinone + NADH + 5 H(+)(in) = a quinol + NAD(+) + 4 H(+)(out). Functionally, NDH-1 shuttles electrons from NADH, via FMN and iron-sulfur (Fe-S) centers, to quinones in the respiratory chain. The immediate electron acceptor for the enzyme in this species is believed to be ubiquinone. Couples the redox reaction to proton translocation (for every two electrons transferred, four hydrogen ions are translocated across the cytoplasmic membrane), and thus conserves the redox energy in a proton gradient. In Methylococcus capsulatus (strain ATCC 33009 / NCIMB 11132 / Bath), this protein is NADH-quinone oxidoreductase subunit K.